A 151-amino-acid chain; its full sequence is Cytochrome c oxidase subunit 5B, mitochondrial (151 aa).

The N-terminal 17 residues, 1–17 (MLRTSLTKGARLTGTRF), are a transit peptide targeting the mitochondrion. Residues 18–85 (VQTKALSKAT…EWGPRRPVHG (68 aa)) are Mitochondrial matrix-facing. Residues 86 to 108 (KGDVAFITKGVFLGLGISFGLFG) form a helical membrane-spanning segment. Over 109–151 (LVRLLANPETPKTMNREWQLKSDEYLKSKNANPWGGYSQVQSK) the chain is Mitochondrial intermembrane.

Belongs to the cytochrome c oxidase IV family. Component of the cytochrome c oxidase (complex IV, CIV), a multisubunit enzyme composed of 12 subunits. The complex is composed of a catalytic core of 3 subunits COX1, COX2 and COX3, encoded in the mitochondrial DNA, and 9 supernumerary subunits COX4, COX5A (or COX5B), COX6, COX7, COX8, COX9, COX12, COX13 and COX26, which are encoded in the nuclear genome. COX5A is the predominant subunit V during aerobic/normoxic growth, it gets replaced by COX5B under anaerobic/hypoxic conditions. The complex exists as a monomer or a dimer and forms supercomplexes (SCs) in the inner mitochondrial membrane with a dimer of ubiquinol-cytochrome c oxidoreductase (cytochrome b-c1 complex, complex III, CIII), resulting in 2 different assemblies (supercomplexes III(2)IV and III(2)IV(2)).

The protein resides in the mitochondrion inner membrane. It functions in the pathway energy metabolism; oxidative phosphorylation. Functionally, component of the cytochrome c oxidase, the last enzyme in the mitochondrial electron transport chain which drives oxidative phosphorylation. The respiratory chain contains 3 multisubunit complexes succinate dehydrogenase (complex II, CII), ubiquinol-cytochrome c oxidoreductase (cytochrome b-c1 complex, complex III, CIII) and cytochrome c oxidase (complex IV, CIV), that cooperate to transfer electrons derived from NADH and succinate to molecular oxygen, creating an electrochemical gradient over the inner membrane that drives transmembrane transport and the ATP synthase. Cytochrome c oxidase is the component of the respiratory chain that catalyzes the reduction of oxygen to water. Electrons originating from reduced cytochrome c in the intermembrane space (IMS) are transferred via the dinuclear copper A center (CU(A)) of COX2 and heme A of COX1 to the active site in COX1, a binuclear center (BNC) formed by heme A3 and copper B (CU(B)). The BNC reduces molecular oxygen to 2 water molecules using 4 electrons from cytochrome c in the IMS and 4 protons from the mitochondrial matrix. The protein is Cytochrome c oxidase subunit 5B, mitochondrial (COX5B) of Saccharomyces cerevisiae (strain ATCC 204508 / S288c) (Baker's yeast).